The chain runs to 233 residues: Cell surface glycoprotein gp42 (233 aa).

The first 16 residues, 1-16 (MLLWMVLLLCVSMTEA), serve as a signal peptide directing secretion. Ig-like domains are found at residues 23–98 (PVLS…GTIQ) and 115–195 (PVLT…RDIS). N29, N66, and N181 each carry an N-linked (GlcNAc...) asparagine glycan. Disulfide bonds link C40-C88 and C136-C184. The GPI-anchor amidated glycine moiety is linked to residue G206. Residues 207–233 (TASMKSTTVVIWLPVSCLVGWPWLLRF) constitute a propeptide, removed in mature form.

As to expression, NK cells.

Its subcellular location is the cell membrane. The sequence is that of Cell surface glycoprotein gp42 from Rattus norvegicus (Rat).